Consider the following 85-residue polypeptide: Probable Thioredoxin (85 aa).

The region spanning 2–85 is the Glutaredoxin domain; it reads VVKIEVFTSP…LFEAISDEIE (84 aa). Cys13 and Cys16 form a disulfide bridge.

This sequence belongs to the glutaredoxin family.

The protein localises to the cytoplasm. Functionally, does not function as a glutathione-disulfide oxidoreductase in the presence of glutathione and glutathione reductase. May be a component of a ribonucleotide-reducing system distinct from the previously described systems utilizing thioredoxin or glutaredoxin. The polypeptide is Probable Thioredoxin (Methanothermobacter marburgensis (strain ATCC BAA-927 / DSM 2133 / JCM 14651 / NBRC 100331 / OCM 82 / Marburg) (Methanobacterium thermoautotrophicum)).